The primary structure comprises 320 residues: Ferrochelatase (320 aa).

Residues His194 and Glu275 each contribute to the Fe cation site.

Belongs to the ferrochelatase family.

It localises to the cytoplasm. The catalysed reaction is heme b + 2 H(+) = protoporphyrin IX + Fe(2+). It participates in porphyrin-containing compound metabolism; protoheme biosynthesis; protoheme from protoporphyrin-IX: step 1/1. Functionally, catalyzes the ferrous insertion into protoporphyrin IX. The sequence is that of Ferrochelatase from Cronobacter sakazakii (strain ATCC BAA-894) (Enterobacter sakazakii).